The following is a 435-amino-acid chain: Serine--tRNA ligase (435 aa).

242–244 contacts L-serine; it reads TAE. 273-275 is an ATP binding site; the sequence is RSE. Glu296 contacts L-serine. 360-363 contributes to the ATP binding site; it reads EISS. Residue Ser396 participates in L-serine binding.

This sequence belongs to the class-II aminoacyl-tRNA synthetase family. Type-1 seryl-tRNA synthetase subfamily. As to quaternary structure, homodimer. The tRNA molecule binds across the dimer.

Its subcellular location is the cytoplasm. It catalyses the reaction tRNA(Ser) + L-serine + ATP = L-seryl-tRNA(Ser) + AMP + diphosphate + H(+). The enzyme catalyses tRNA(Sec) + L-serine + ATP = L-seryl-tRNA(Sec) + AMP + diphosphate + H(+). It participates in aminoacyl-tRNA biosynthesis; selenocysteinyl-tRNA(Sec) biosynthesis; L-seryl-tRNA(Sec) from L-serine and tRNA(Sec): step 1/1. In terms of biological role, catalyzes the attachment of serine to tRNA(Ser). Is also able to aminoacylate tRNA(Sec) with serine, to form the misacylated tRNA L-seryl-tRNA(Sec), which will be further converted into selenocysteinyl-tRNA(Sec). This chain is Serine--tRNA ligase, found in Vibrio vulnificus (strain CMCP6).